The sequence spans 108 residues: Large ribosomal subunit protein uL24 (108 aa).

Belongs to the universal ribosomal protein uL24 family. Part of the 50S ribosomal subunit.

Functionally, one of two assembly initiator proteins, it binds directly to the 5'-end of the 23S rRNA, where it nucleates assembly of the 50S subunit. One of the proteins that surrounds the polypeptide exit tunnel on the outside of the subunit. The sequence is that of Large ribosomal subunit protein uL24 from Frankia casuarinae (strain DSM 45818 / CECT 9043 / HFP020203 / CcI3).